Here is a 237-residue protein sequence, read N- to C-terminus: MSVHIGAQEGQIAETVLLPGDPLRAKYIAETFLEDVELYNEVRGMYGFTGTYKGKRISVQGTGMGVPSMSIYVNELIMSYGAKNLIRVGTAGGIQEDVKVRDVVIAMSASSEMGQNRVRFNGMDYAPTATFDLLHRAYMNAEKAGIPVKVGQIFTADQFYQDDFHHFKKWADFGCLAIEMEAAGLYTLAAKHKVNALTILTISDHLLTGEETTSEERQSTFDEMIRVALDTAVEVTN.

Position 4 (H4) interacts with a purine D-ribonucleoside. Phosphate contacts are provided by residues G20, R24, R43, and 87–90 (RVGT). Residues 179–181 (EME) and 203–204 (SD) contribute to the a purine D-ribonucleoside site. The active-site Proton donor is D204.

Belongs to the PNP/UDP phosphorylase family. Homohexamer; trimer of homodimers.

It catalyses the reaction a purine D-ribonucleoside + phosphate = a purine nucleobase + alpha-D-ribose 1-phosphate. The enzyme catalyses a purine 2'-deoxy-D-ribonucleoside + phosphate = a purine nucleobase + 2-deoxy-alpha-D-ribose 1-phosphate. Functionally, catalyzes the reversible phosphorolytic breakdown of the N-glycosidic bond in the beta-(deoxy)ribonucleoside molecules, with the formation of the corresponding free purine bases and pentose-1-phosphate. This Exiguobacterium sp. (strain ATCC BAA-1283 / AT1b) protein is Purine nucleoside phosphorylase DeoD-type.